A 227-amino-acid chain; its full sequence is Cytochrome c oxidase subunit 2 (227 aa).

The Mitochondrial intermembrane segment spans residues 1–14 (MAYPFQLGLQDATS). Residues 15–45 (PIMEELLHFHDHTLMIVFLISSLVLYIISLM) traverse the membrane as a helical segment. Topologically, residues 46-59 (LTTKLTHTSTMDAQ) are mitochondrial matrix. The helical transmembrane segment at 60-87 (EVETVWTILPAIILILIALPSLRILYMM) threads the bilayer. Topologically, residues 88 to 227 (DEINNPSLTV…YFETWSALMV (140 aa)) are mitochondrial intermembrane. Residues His161, Cys196, Glu198, Cys200, His204, and Met207 each contribute to the Cu cation site. Glu198 provides a ligand contact to Mg(2+). Tyr218 bears the Phosphotyrosine mark.

The protein belongs to the cytochrome c oxidase subunit 2 family. Component of the cytochrome c oxidase (complex IV, CIV), a multisubunit enzyme composed of 14 subunits. The complex is composed of a catalytic core of 3 subunits MT-CO1, MT-CO2 and MT-CO3, encoded in the mitochondrial DNA, and 11 supernumerary subunits COX4I, COX5A, COX5B, COX6A, COX6B, COX6C, COX7A, COX7B, COX7C, COX8 and NDUFA4, which are encoded in the nuclear genome. The complex exists as a monomer or a dimer and forms supercomplexes (SCs) in the inner mitochondrial membrane with NADH-ubiquinone oxidoreductase (complex I, CI) and ubiquinol-cytochrome c oxidoreductase (cytochrome b-c1 complex, complex III, CIII), resulting in different assemblies (supercomplex SCI(1)III(2)IV(1) and megacomplex MCI(2)III(2)IV(2)). Found in a complex with TMEM177, COA6, COX18, COX20, SCO1 and SCO2. Interacts with TMEM177 in a COX20-dependent manner. Interacts with COX20. Interacts with COX16. Requires Cu cation as cofactor.

It is found in the mitochondrion inner membrane. The catalysed reaction is 4 Fe(II)-[cytochrome c] + O2 + 8 H(+)(in) = 4 Fe(III)-[cytochrome c] + 2 H2O + 4 H(+)(out). In terms of biological role, component of the cytochrome c oxidase, the last enzyme in the mitochondrial electron transport chain which drives oxidative phosphorylation. The respiratory chain contains 3 multisubunit complexes succinate dehydrogenase (complex II, CII), ubiquinol-cytochrome c oxidoreductase (cytochrome b-c1 complex, complex III, CIII) and cytochrome c oxidase (complex IV, CIV), that cooperate to transfer electrons derived from NADH and succinate to molecular oxygen, creating an electrochemical gradient over the inner membrane that drives transmembrane transport and the ATP synthase. Cytochrome c oxidase is the component of the respiratory chain that catalyzes the reduction of oxygen to water. Electrons originating from reduced cytochrome c in the intermembrane space (IMS) are transferred via the dinuclear copper A center (CU(A)) of subunit 2 and heme A of subunit 1 to the active site in subunit 1, a binuclear center (BNC) formed by heme A3 and copper B (CU(B)). The BNC reduces molecular oxygen to 2 water molecules using 4 electrons from cytochrome c in the IMS and 4 protons from the mitochondrial matrix. This chain is Cytochrome c oxidase subunit 2 (MT-CO2), found in Canis lupus familiaris (Dog).